The sequence spans 221 residues: Thiamine-phosphate synthase (221 aa).

4-amino-2-methyl-5-(diphosphooxymethyl)pyrimidine-binding positions include 44–48 (QLRLK) and asparagine 80. 2 residues coordinate Mg(2+): aspartate 81 and aspartate 100. 4-amino-2-methyl-5-(diphosphooxymethyl)pyrimidine is bound at residue threonine 119. Position 146-148 (146-148 (TTT)) interacts with 2-[(2R,5Z)-2-carboxy-4-methylthiazol-5(2H)-ylidene]ethyl phosphate. Lysine 149 provides a ligand contact to 4-amino-2-methyl-5-(diphosphooxymethyl)pyrimidine. 2-[(2R,5Z)-2-carboxy-4-methylthiazol-5(2H)-ylidene]ethyl phosphate is bound at residue glycine 176.

Belongs to the thiamine-phosphate synthase family. Requires Mg(2+) as cofactor.

It catalyses the reaction 2-[(2R,5Z)-2-carboxy-4-methylthiazol-5(2H)-ylidene]ethyl phosphate + 4-amino-2-methyl-5-(diphosphooxymethyl)pyrimidine + 2 H(+) = thiamine phosphate + CO2 + diphosphate. It carries out the reaction 2-(2-carboxy-4-methylthiazol-5-yl)ethyl phosphate + 4-amino-2-methyl-5-(diphosphooxymethyl)pyrimidine + 2 H(+) = thiamine phosphate + CO2 + diphosphate. The enzyme catalyses 4-methyl-5-(2-phosphooxyethyl)-thiazole + 4-amino-2-methyl-5-(diphosphooxymethyl)pyrimidine + H(+) = thiamine phosphate + diphosphate. The protein operates within cofactor biosynthesis; thiamine diphosphate biosynthesis; thiamine phosphate from 4-amino-2-methyl-5-diphosphomethylpyrimidine and 4-methyl-5-(2-phosphoethyl)-thiazole: step 1/1. Condenses 4-methyl-5-(beta-hydroxyethyl)thiazole monophosphate (THZ-P) and 2-methyl-4-amino-5-hydroxymethyl pyrimidine pyrophosphate (HMP-PP) to form thiamine monophosphate (TMP). In Hyphomonas neptunium (strain ATCC 15444), this protein is Thiamine-phosphate synthase.